A 267-amino-acid chain; its full sequence is Hydroxyethylthiazole kinase 2 (267 aa).

Met41 serves as a coordination point for substrate. Lys116 and Thr166 together coordinate ATP. Gly193 provides a ligand contact to substrate.

This sequence belongs to the Thz kinase family. It depends on Mg(2+) as a cofactor.

The enzyme catalyses 5-(2-hydroxyethyl)-4-methylthiazole + ATP = 4-methyl-5-(2-phosphooxyethyl)-thiazole + ADP + H(+). It participates in cofactor biosynthesis; thiamine diphosphate biosynthesis; 4-methyl-5-(2-phosphoethyl)-thiazole from 5-(2-hydroxyethyl)-4-methylthiazole: step 1/1. Catalyzes the phosphorylation of the hydroxyl group of 4-methyl-5-beta-hydroxyethylthiazole (THZ). The sequence is that of Hydroxyethylthiazole kinase 2 from Streptococcus pneumoniae (strain 70585).